The chain runs to 174 residues: uncharacterized protein (174 aa).

This sequence belongs to the gamma-class carbonic anhydrase family.

This is an uncharacterized protein from Pseudomonas aeruginosa (strain ATCC 15692 / DSM 22644 / CIP 104116 / JCM 14847 / LMG 12228 / 1C / PRS 101 / PAO1).